A 444-amino-acid chain; its full sequence is Protein-serine O-palmitoleoyltransferase porcupine (444 aa).

10 consecutive transmembrane segments (helical) span residues asparagine 29–tryptophan 49, valine 81–glycine 101, phenylalanine 128–valine 150, threonine 163–phenylalanine 183, leucine 201–serine 221, tyrosine 249–alanine 269, phenylalanine 304–alanine 324, aspartate 326–phenylalanine 346, valine 383–methionine 403, and tryptophan 420–leucine 440. Residue histidine 323 is part of the active site.

The protein belongs to the membrane-bound acyltransferase family. Porcupine subfamily.

It localises to the membrane. It carries out the reaction [Wnt protein]-L-serine + (9Z)-hexadecenoyl-CoA = [Wnt protein]-O-(9Z)-hexadecenoyl-L-serine + CoA. Key regulator of the Wnt signaling pathway that mediates lipid modification of Wnt proteins. Acts as a protein-serine O-palmitoleoyltransferase that catalyzes the attachment of palmitoleate, a 16-carbon monounsaturated fatty acid (C16:1(9Z)), to Wnt proteins. Serine palmitoleoylation of WNT proteins is required for efficient binding to frizzled receptors. Has a role in cell specification, specifically in blastomere signaling. Involved in cytosketetal polarity. Required for the orientation of mitotic spindle axis. This chain is Protein-serine O-palmitoleoyltransferase porcupine, found in Caenorhabditis briggsae.